Here is a 535-residue protein sequence, read N- to C-terminus: Phosphoenolpyruvate carboxykinase (ATP) (535 aa).

Residues Arg-59, Tyr-201, and Lys-207 each coordinate substrate. Residues Lys-207, His-226, and 243–251 (GLSGTGKTT) each bind ATP. Positions 207 and 226 each coordinate Mn(2+). Asp-264 is a binding site for Mn(2+). Residues Glu-292, Arg-328, 444-445 (RI), and Thr-450 contribute to the ATP site. Arg-328 is a binding site for substrate.

The protein belongs to the phosphoenolpyruvate carboxykinase (ATP) family. It depends on Mn(2+) as a cofactor.

The protein localises to the cytoplasm. The catalysed reaction is oxaloacetate + ATP = phosphoenolpyruvate + ADP + CO2. It functions in the pathway carbohydrate biosynthesis; gluconeogenesis. Its function is as follows. Involved in the gluconeogenesis. Catalyzes the conversion of oxaloacetate (OAA) to phosphoenolpyruvate (PEP) through direct phosphoryl transfer between the nucleoside triphosphate and OAA. This Porphyromonas gingivalis (strain ATCC BAA-308 / W83) protein is Phosphoenolpyruvate carboxykinase (ATP).